The primary structure comprises 296 residues: NAD kinase (296 aa).

The active-site Proton acceptor is the D72. Residues 72–73 (DG), 146–147 (ND), R157, K174, D176, 187–192 (TAYALS), and Q247 contribute to the NAD(+) site.

It belongs to the NAD kinase family. The cofactor is a divalent metal cation.

The protein resides in the cytoplasm. It catalyses the reaction NAD(+) + ATP = ADP + NADP(+) + H(+). In terms of biological role, involved in the regulation of the intracellular balance of NAD and NADP, and is a key enzyme in the biosynthesis of NADP. Catalyzes specifically the phosphorylation on 2'-hydroxyl of the adenosine moiety of NAD to yield NADP. The protein is NAD kinase of Pseudomonas fluorescens (strain Pf0-1).